The sequence spans 246 residues: Probable transcriptional regulatory protein WRi_002620 (246 aa).

A disordered region spans residues Met-1–Ser-22.

It belongs to the TACO1 family.

The protein resides in the cytoplasm. The protein is Probable transcriptional regulatory protein WRi_002620 of Wolbachia sp. subsp. Drosophila simulans (strain wRi).